The primary structure comprises 971 residues: Exportin-2 (971 aa).

The region spanning 29-102 is the Importin N-terminal domain; sequence AEKFLESVEG…KANIVNLMLT (74 aa).

This sequence belongs to the XPO2/CSE1 family. As to quaternary structure, interacts with cftr. As to expression, detected in larval gut, liver, exocrine pancreas and part of the brain and retina at 96 hpf.

Its subcellular location is the cytoplasm. It localises to the nucleus. It is found in the apical cell membrane. The protein localises to the basal cell membrane. The protein resides in the lateral cell membrane. Functionally, export receptor for importin alpha. Mediates importin-alpha re-export from the nucleus to the cytoplasm after import substrates have been released into the nucleoplasm. Negatively regulates fluid secretion and plays a role in fluid homeostasis by down-regulating cftr activity. The chain is Exportin-2 (cse1l) from Danio rerio (Zebrafish).